The sequence spans 128 residues: MARVKRGVTTRARHKKVIALAKGYRGRSKNCYRAALQRLEKALAYAYRDRRARKRDFRSLWIVRINAAAGLYGLRYSEFMHGVSLCSIGLNRKMLAEMAVRDKGAFEKIAHAAAQACGRTCVVAQSNS.

The protein belongs to the bacterial ribosomal protein bL20 family.

Binds directly to 23S ribosomal RNA and is necessary for the in vitro assembly process of the 50S ribosomal subunit. It is not involved in the protein synthesizing functions of that subunit. The chain is Large ribosomal subunit protein bL20 from Anaplasma phagocytophilum (strain HZ).